A 398-amino-acid polypeptide reads, in one-letter code: Queuine tRNA-ribosyltransferase (398 aa).

D102 functions as the Proton acceptor in the catalytic mechanism. Substrate contacts are provided by residues 102–106, D156, Q205, and G232; that span reads DSGGF. Residues 263–269 are RNA binding; it reads GVGTPED. Catalysis depends on D282, which acts as the Nucleophile. The RNA binding; important for wobble base 34 recognition stretch occupies residues 287 to 291; it reads TRNAR. C320, C322, C325, and H362 together coordinate Zn(2+).

It belongs to the queuine tRNA-ribosyltransferase family. As to quaternary structure, homodimer. Within each dimer, one monomer is responsible for RNA recognition and catalysis, while the other monomer binds to the replacement base PreQ1. It depends on Zn(2+) as a cofactor.

It carries out the reaction 7-aminomethyl-7-carbaguanine + guanosine(34) in tRNA = 7-aminomethyl-7-carbaguanosine(34) in tRNA + guanine. The protein operates within tRNA modification; tRNA-queuosine biosynthesis. In terms of biological role, catalyzes the base-exchange of a guanine (G) residue with the queuine precursor 7-aminomethyl-7-deazaguanine (PreQ1) at position 34 (anticodon wobble position) in tRNAs with GU(N) anticodons (tRNA-Asp, -Asn, -His and -Tyr). Catalysis occurs through a double-displacement mechanism. The nucleophile active site attacks the C1' of nucleotide 34 to detach the guanine base from the RNA, forming a covalent enzyme-RNA intermediate. The proton acceptor active site deprotonates the incoming PreQ1, allowing a nucleophilic attack on the C1' of the ribose to form the product. After dissociation, two additional enzymatic reactions on the tRNA convert PreQ1 to queuine (Q), resulting in the hypermodified nucleoside queuosine (7-(((4,5-cis-dihydroxy-2-cyclopenten-1-yl)amino)methyl)-7-deazaguanosine). This is Queuine tRNA-ribosyltransferase from Polaromonas sp. (strain JS666 / ATCC BAA-500).